Here is a 317-residue protein sequence, read N- to C-terminus: Ribosomal lysine N-methyltransferase 5 (317 aa).

S-adenosyl-L-methionine-binding positions include tryptophan 87, 141 to 143 (GSG), aspartate 163, tryptophan 214, and leucine 237.

This sequence belongs to the class I-like SAM-binding methyltransferase superfamily. RKM5 family.

Functionally, S-adenosyl-L-methionine-dependent protein-lysine N-methyltransferase that methylates 60S ribosomal protein L1. The sequence is that of Ribosomal lysine N-methyltransferase 5 (RKM5) from Eremothecium gossypii (strain ATCC 10895 / CBS 109.51 / FGSC 9923 / NRRL Y-1056) (Yeast).